The sequence spans 51 residues: Protein I177L (51 aa).

N11 carries an N-linked (GlcNAc...) asparagine; by host glycan.

The protein belongs to the asfivirus I177L family.

The protein resides in the virion. The chain is Protein I177L from Ornithodoros (relapsing fever ticks).